The primary structure comprises 230 residues: DNA repair protein rdl1 (230 aa).

In terms of assembly, interacts with rlp1 and sws1.

The protein resides in the cytoplasm. Its subcellular location is the nucleus. In terms of biological role, involved in homologous recombination where it functions at an early stage of recombination in a pre-recombinogenic complex with rlp1 and sws1. Also has a role at a later stage of recombination in association with the rhp55-rhp57 complex. In Schizosaccharomyces pombe (strain 972 / ATCC 24843) (Fission yeast), this protein is DNA repair protein rdl1 (rdl1).